Consider the following 459-residue polypeptide: Spermatogenesis-associated protein 1 (459 aa).

A compositionally biased stretch (basic and acidic residues) spans 193-205 (LKELPNKNQEEAG). The segment at 193-213 (LKELPNKNQEEAGGKATAEKS) is disordered. Coiled coils occupy residues 287–374 (TDIS…YKKL) and 400–453 (LIIQ…KKII).

In terms of assembly, interacts with IFT20.

It is found in the cytoplasmic vesicle. The protein resides in the secretory vesicle. It localises to the acrosome. The sequence is that of Spermatogenesis-associated protein 1 (SPATA1) from Homo sapiens (Human).